A 232-amino-acid chain; its full sequence is Thrombin-like enzyme bothrombin (232 aa).

One can recognise a Peptidase S1 domain in the interval 1-223 (VIGGDECDIN…YLPWIQSIIA (223 aa)). 6 cysteine pairs are disulfide-bonded: Cys-7–Cys-139, Cys-26–Cys-42, Cys-74–Cys-230, Cys-118–Cys-184, Cys-150–Cys-163, and Cys-174–Cys-199. Catalysis depends on charge relay system residues His-41 and Asp-86. Asn-98 and Asn-146 each carry an N-linked (GlcNAc...) asparagine glycan. Catalysis depends on Ser-178, which acts as the Charge relay system. Asn-225 is a glycosylation site (N-linked (GlcNAc...) asparagine).

The protein belongs to the peptidase S1 family. Snake venom subfamily. As to quaternary structure, monomer. In terms of tissue distribution, expressed by the venom gland.

Its subcellular location is the secreted. It catalyses the reaction Selective cleavage of Arg-|-Xaa bond in fibrinogen, to form fibrin, and release fibrinopeptide A. The specificity of further degradation of fibrinogen varies with species origin of the enzyme.. Inhibited by diisopropylfluorophosphate (DFP), but not by hirudin. Thrombin-like snake venom serine protease that clots fibrinogen by releasing fibrinopeptide A from the alpha chain of fibrinogen (FGA), induces platelet aggregation through its interaction with GPIb (GP1BA/GP1BB), and activates factor VIII (F8). This is Thrombin-like enzyme bothrombin from Bothrops jararaca (Jararaca).